Reading from the N-terminus, the 288-residue chain is Energy-coupling factor transporter ATP-binding protein EcfA2 (288 aa).

One can recognise an ABC transporter domain in the interval 3–243; the sequence is IVFEAVSHIY…RAELEAIGLG (241 aa). An ATP-binding site is contributed by 40-47; it reads GPTGSGKS.

It belongs to the ABC transporter superfamily. Energy-coupling factor EcfA family. In terms of assembly, forms a stable energy-coupling factor (ECF) transporter complex composed of 2 membrane-embedded substrate-binding proteins (S component), 2 ATP-binding proteins (A component) and 2 transmembrane proteins (T component).

The protein resides in the cell membrane. In terms of biological role, ATP-binding (A) component of a common energy-coupling factor (ECF) ABC-transporter complex. Unlike classic ABC transporters this ECF transporter provides the energy necessary to transport a number of different substrates. The protein is Energy-coupling factor transporter ATP-binding protein EcfA2 of Symbiobacterium thermophilum (strain DSM 24528 / JCM 14929 / IAM 14863 / T).